The chain runs to 399 residues: Ubiquitin-like modifier-activating enzyme 5 (399 aa).

Gly76, Asp97, Lys120, Asn143, and Asn177 together coordinate ATP. The Zn(2+) site is built by Cys219 and Cys222. Cys243 acts as the Glycyl thioester intermediate in catalysis. 2 residues coordinate Zn(2+): Cys296 and Cys301.

The protein belongs to the ubiquitin-activating E1 family. UBA5 subfamily.

Its function is as follows. E1-like enzyme which activates UFM1. This is Ubiquitin-like modifier-activating enzyme 5 from Drosophila mojavensis (Fruit fly).